Reading from the N-terminus, the 703-residue chain is Fanconi anemia group B protein homolog (703 aa).

As to quaternary structure, belongs to the multisubunit FA complex composed of FANCA, FANCB, FANCC, FANCE, FANCF, FANCG, FANCL/PHF9 and FANCM.

It is found in the nucleus. In terms of biological role, DNA repair protein required for FANCD2 ubiquitination. This Mus musculus (Mouse) protein is Fanconi anemia group B protein homolog (Fancb).